Here is a 206-residue protein sequence, read N- to C-terminus: Small ribosomal subunit protein uS4 (206 aa).

Residues 96 to 156 (GRLDNVVYRM…EKSKNQLRIQ (61 aa)) enclose the S4 RNA-binding domain.

The protein belongs to the universal ribosomal protein uS4 family. In terms of assembly, part of the 30S ribosomal subunit. Contacts protein S5. The interaction surface between S4 and S5 is involved in control of translational fidelity.

In terms of biological role, one of the primary rRNA binding proteins, it binds directly to 16S rRNA where it nucleates assembly of the body of the 30S subunit. Functionally, with S5 and S12 plays an important role in translational accuracy. In Saccharophagus degradans (strain 2-40 / ATCC 43961 / DSM 17024), this protein is Small ribosomal subunit protein uS4.